Reading from the N-terminus, the 636-residue chain is Probable potassium transport system protein Kup (636 aa).

Transmembrane regions (helical) follow at residues 22 to 42 (LGLLVAAVGVVYGDIGTSPLY), 64 to 84 (ILSLILWSLLWVVSFKYVMFI), 115 to 135 (LMVICGLIGASLFYGDSMITP), 150 to 170 (FDGIDHWVVPISLVVLVALFL), 182 to 202 (LFGPIMVTWFVVLGALGVHGI), 220 to 240 (FFVVHPGMGVAILGAVVLALT), 261 to 281 (WFILVLPALVLNYFGQGALLL), 293 to 313 (LLAPSWALLPLVGLATMATVI), 351 to 371 (IYIGAVNWTLMVGVVLLVIGF), 383 to 403 (VAVTGTMLMTTILVSAVMLLL), 408 to 428 (PVLAVPLLMGFLFVDGLFFAA), and 433 to 453 (IVQGGAFPVLAGGVLFLLMST).

It belongs to the HAK/KUP transporter (TC 2.A.72) family.

It is found in the cell inner membrane. The catalysed reaction is K(+)(in) + H(+)(in) = K(+)(out) + H(+)(out). Transport of potassium into the cell. Likely operates as a K(+):H(+) symporter. This Pseudomonas putida (strain GB-1) protein is Probable potassium transport system protein Kup.